A 524-amino-acid chain; its full sequence is BEL1-like homeodomain protein 3 (524 aa).

An SR/KY domain region spans residues 171–187 (SRYLKPTQQLLDEVVSV). Composition is skewed to basic and acidic residues over residues 195–205 (NKKMKNDKGQD) and 216–235 (EDDK…ELQS). Residues 195–236 (NKKMKNDKGQDFHNGSSDNITEDDKSQSQELSPSERQELQSK) are disordered. Residues 229–300 (ERQELQSKKS…CLRDAIKEQI (72 aa)) form a BELL domain region. Positions 346–408 (AWRPQRGLPE…NARVRLWKPM (63 aa)) form a DNA-binding region, homeobox. Residues 429 to 463 (QDTKKMQETSQLKHEDSSSSQQQNQGNNNNNIPYT) form a disordered region. Over residues 430–445 (DTKKMQETSQLKHEDS) the composition is skewed to basic and acidic residues. The segment covering 446–459 (SSSQQQNQGNNNNN) has biased composition (low complexity).

Belongs to the TALE/BELL homeobox family. As to quaternary structure, may form heterodimeric complex with the TALE/KNOX protein STM. Interacts with OFP1, OFP2, OFP3, OFP4, OFP5 and OFP15.

Its subcellular location is the nucleus. In terms of biological role, transcription factor that is responsive of the nuclear import of SHOOT MERISTEMLESS (STM). The polypeptide is BEL1-like homeodomain protein 3 (BLH3) (Arabidopsis thaliana (Mouse-ear cress)).